A 247-amino-acid chain; its full sequence is Uridylate kinase (247 aa).

An ATP-binding site is contributed by 18-21; that stretch reads KLSG. Residue Gly60 participates in UMP binding. ATP contacts are provided by Gly61 and Arg65. UMP-binding positions include Asp80 and 141 to 148; that span reads TGNPFFTT. The ATP site is built by Thr168, Tyr174, and Asp177.

This sequence belongs to the UMP kinase family. As to quaternary structure, homohexamer.

The protein resides in the cytoplasm. It catalyses the reaction UMP + ATP = UDP + ADP. The protein operates within pyrimidine metabolism; CTP biosynthesis via de novo pathway; UDP from UMP (UMPK route): step 1/1. Inhibited by UTP. Catalyzes the reversible phosphorylation of UMP to UDP. The polypeptide is Uridylate kinase (Pseudomonas savastanoi pv. phaseolicola (strain 1448A / Race 6) (Pseudomonas syringae pv. phaseolicola (strain 1448A / Race 6))).